An 854-amino-acid chain; its full sequence is Envelope glycoprotein gp160 (854 aa).

The signal sequence occupies residues 1–31 (MKVMEKKKRDWNSLSIITIITIILLTPCLTS). Over 32-675 (ELWVTVYYGV…ITKWLWYIKI (644 aa)) the chain is Extracellular. Cystine bridges form between C53–C73, C118–C203, C125–C194, C130–C155, C216–C245, and C226–C237. The segment at 130–154 (CSKANFSQAKNLTNQTSSPPLEMKN) is V1. N-linked (GlcNAc...) asparagine; by host glycosylation is found at N134, N140, N143, N154, N158, N186, and N195. Positions 155-194 (CSFNVTTELRDKKKQVYSLFYVEDVVNLGNENNTYRIINC) are V2. Residues N239, N260, N267, N274, N299, N331, N336, N351, and N356 are each glycosylated (N-linked (GlcNAc...) asparagine; by host). The V3 stretch occupies residues 294–327 (CHRPGNNTRGEVQIGPGMTFYNIENVVGDTRSAY). C294 and C328 are disulfide-bonded. Positions 362–372 (ASGGDPEVTHH) are CD4-binding loop. 2 cysteine pairs are disulfide-bonded: C376–C429 and C383–C402. Residues 383–402 (CNTSQIFTDNITNGIIILPC) are V4. Residues N384, N392, N426, N432, N446, and N450 are each glycosylated (N-linked (GlcNAc...) asparagine; by host). V5 stretches follow at residues 445–456 (TNNSGNLTFRPT) and 447–456 (NSGNLTFRPT). The tract at residues 501–522 (AAFGLGALFLGFLGAAGSTMGA) is fusion peptide. The tract at residues 564–582 (KQLQARLLAVERYLQDQQI) is immunosuppression. C588 and C594 are oxidised to a cystine. Residues N601, N608, N616, and N628 are each glycosylated (N-linked (GlcNAc...) asparagine; by host). A coiled-coil region spans residues 624–658 (KLVSNYTGKIFGLLEEAQSQQEKNERDLLELDQWA). Residues 653–674 (ELDQWASLWNWFDITKWLWYIK) form an MPER; binding to GalCer region. Residues 676–696 (FLMAVGGIIGLRIIMTVFSVV) traverse the membrane as a helical segment. Topologically, residues 697–854 (RRVRQGYSPL…IRQGLERALL (158 aa)) are cytoplasmic. The YXXL motif; contains endocytosis signal motif lies at 703-706 (YSPL). The Di-leucine internalization motif motif lies at 853–854 (LL).

This sequence belongs to the HIV-1 env protein family. The mature envelope protein (Env) consists of a homotrimer of non-covalently associated gp120-gp41 heterodimers. The resulting complex protrudes from the virus surface as a spike. There seems to be as few as 10 spikes on the average virion. Interacts with host CD4, CCR5 and CXCR4. Gp120 also interacts with the C-type lectins CD209/DC-SIGN and CLEC4M/DC-SIGNR (collectively referred to as DC-SIGN(R)). Gp120 and gp41 interact with GalCer. Gp120 interacts with host ITGA4/ITGB7 complex; on CD4+ T-cells, this interaction results in rapid activation of integrin ITGAL/LFA-1, which facilitates efficient cell-to-cell spreading of HIV-1. Gp120 interacts with cell-associated heparan sulfate; this interaction increases virus infectivity on permissive cells and may be involved in infection of CD4- cells. As to quaternary structure, the mature envelope protein (Env) consists of a homotrimer of non-covalently associated gp120-gp41 heterodimers. The resulting complex protrudes from the virus surface as a spike. There seems to be as few as 10 spikes on the average virion. Highly glycosylated by host. The high number of glycan on the protein is reffered to as 'glycan shield' because it contributes to hide protein sequence from adaptive immune system. In terms of processing, palmitoylation of the transmembrane protein and of Env polyprotein (prior to its proteolytic cleavage) is essential for their association with host cell membrane lipid rafts. Palmitoylation is therefore required for envelope trafficking to classical lipid rafts, but not for viral replication. Post-translationally, specific enzymatic cleavages in vivo yield mature proteins. Envelope glycoproteins are synthesized as an inactive precursor that is heavily N-glycosylated and processed likely by host cell furin in the Golgi to yield the mature SU and TM proteins. The cleavage site between SU and TM requires the minimal sequence [KR]-X-[KR]-R. About 2 of the 9 disulfide bonds of gp41 are reduced by P4HB/PDI, following binding to CD4 receptor.

The protein resides in the virion membrane. It is found in the host cell membrane. Its subcellular location is the host endosome membrane. Functionally, attaches the virus to the host lymphoid cell by binding to the primary receptor CD4. This interaction induces a structural rearrangement creating a high affinity binding site for a chemokine coreceptor like CXCR4 and/or CCR5. Acts as a ligand for CD209/DC-SIGN and CLEC4M/DC-SIGNR, which are respectively found on dendritic cells (DCs), and on endothelial cells of liver sinusoids and lymph node sinuses. These interactions allow capture of viral particles at mucosal surfaces by these cells and subsequent transmission to permissive cells. HIV subverts the migration properties of dendritic cells to gain access to CD4+ T-cells in lymph nodes. Virus transmission to permissive T-cells occurs either in trans (without DCs infection, through viral capture and transmission), or in cis (following DCs productive infection, through the usual CD4-gp120 interaction), thereby inducing a robust infection. In trans infection, bound virions remain infectious over days and it is proposed that they are not degraded, but protected in non-lysosomal acidic organelles within the DCs close to the cell membrane thus contributing to the viral infectious potential during DCs' migration from the periphery to the lymphoid tissues. On arrival at lymphoid tissues, intact virions recycle back to DCs' cell surface allowing virus transmission to CD4+ T-cells. Its function is as follows. Acts as a class I viral fusion protein. Under the current model, the protein has at least 3 conformational states: pre-fusion native state, pre-hairpin intermediate state, and post-fusion hairpin state. During fusion of viral and target intracellular membranes, the coiled coil regions (heptad repeats) assume a trimer-of-hairpins structure, positioning the fusion peptide in close proximity to the C-terminal region of the ectodomain. The formation of this structure appears to drive apposition and subsequent fusion of viral and target cell membranes. Complete fusion occurs in host cell endosomes and is dynamin-dependent, however some lipid transfer might occur at the plasma membrane. The virus undergoes clathrin-dependent internalization long before endosomal fusion, thus minimizing the surface exposure of conserved viral epitopes during fusion and reducing the efficacy of inhibitors targeting these epitopes. Membranes fusion leads to delivery of the nucleocapsid into the cytoplasm. Oligomerizes in the host endoplasmic reticulum into predominantly trimers. In a second time, gp160 transits in the host Golgi, where glycosylation is completed. The precursor is then proteolytically cleaved in the trans-Golgi and thereby activated by cellular furin or furin-like proteases to produce gp120 and gp41. This chain is Envelope glycoprotein gp160, found in Pan (chimpanzees).